The chain runs to 334 residues: Protein-methionine-sulfoxide reductase catalytic subunit MsrP (334 aa).

A signal peptide (tat-type signal) is located at residues 1-44 (MKKIRPLTEADVTAESAFFMQRRQVLKALGISAAALSLPSTAQA). Mo-molybdopterin-binding positions include N88, 91–92 (YE), C146, T181, N233, R238, and 249–251 (GIK).

The protein belongs to the MsrP family. Heterodimer of a catalytic subunit (MsrP) and a heme-binding subunit (MsrQ). It depends on Mo-molybdopterin as a cofactor. Predicted to be exported by the Tat system. The position of the signal peptide cleavage has not been experimentally proven.

Its subcellular location is the periplasm. It catalyses the reaction L-methionyl-[protein] + a quinone + H2O = L-methionyl-(S)-S-oxide-[protein] + a quinol. The catalysed reaction is L-methionyl-[protein] + a quinone + H2O = L-methionyl-(R)-S-oxide-[protein] + a quinol. Part of the MsrPQ system that repairs oxidized periplasmic proteins containing methionine sulfoxide residues (Met-O), using respiratory chain electrons. Thus protects these proteins from oxidative-stress damage caused by reactive species of oxygen and chlorine generated by the host defense mechanisms. MsrPQ is essential for the maintenance of envelope integrity under bleach stress, rescuing a wide series of structurally unrelated periplasmic proteins from methionine oxidation, including the primary periplasmic chaperone SurA and the lipoprotein Pal. The catalytic subunit MsrP is non-stereospecific, being able to reduce both (R-) and (S-) diastereoisomers of methionine sulfoxide. The polypeptide is Protein-methionine-sulfoxide reductase catalytic subunit MsrP (Salmonella newport (strain SL254)).